Consider the following 959-residue polypeptide: Nucleoporin NUP100/NSP100 (959 aa).

The interval 1–104 (MFGNNRPMFG…NSSNASNGNT (104 aa)) is disordered. 3 FG repeats span residues 2-3 (FG), 9-10 (FG), and Gly17. A compositionally biased stretch (polar residues) spans 12-36 (SNLSFGSNTSSFGGQQSQQPNSLFG). Residues 21–24 (SSFG) form an SLFG 1; approximate repeat. An SLFG 2 repeat occupies 33 to 36 (SLFG). Positions 37-48 (NSNNNNNSTSNN) are enriched in low complexity. Residues 51–54 (SGFG) form an SLFG 3; approximate repeat. Low complexity-rich tracts occupy residues 56–81 (FTSAAGSNSNSLFGNNNTQNNGAFGQ) and 92–104 (GSLNSSNASNGNT). One copy of the SLFG 4 repeat lies at 66–69 (SLFG). The stretch at 77 to 80 (GAFG) is one GLFG 1; approximate repeat. One copy of the SLFG 5; approximate repeat lies at 89–92 (SPFG). Residues 105–106 (FG) form an FG 4 repeat. The stretch at 112–115 (GSFG) is one GLFG 2; approximate repeat. Low complexity predominate over residues 121 to 136 (AFNNNSNSTNSPFGFN). The interval 121–172 (AFNNNSNSTNSPFGFNKPNTGGTLFGSQNNNSAGTSSLFGGQSTSTTGTFGN) is disordered. The SLFG 6; approximate repeat unit spans residues 131–134 (SPFG). Residues 137 to 153 (KPNTGGTLFGSQNNNSA) show a composition bias toward polar residues. One copy of the FG 5 repeat lies at 145–146 (FG). Residues 154-172 (GTSSLFGGQSTSTTGTFGN) show a composition bias toward low complexity. An SLFG 7 repeat occupies 157-160 (SLFG). One copy of the GLFG 3; approximate repeat lies at 168–171 (GTFG). Residues 175–178 (SSFG) form an SLFG 8; approximate repeat. One copy of the FG 6 repeat lies at 189 to 190 (FG). The tract at residues 190-394 (GAGNNSQSNT…NNQQQQSTGL (205 aa)) is disordered. Residues 192–245 (GNNSQSNTTGSLFGNQQSSAFGTNNQQGSLFGQQSQNTNNAFGNQNQLGGSSFG) are compositionally biased toward polar residues. One copy of the SLFG 9 repeat lies at 202 to 205 (SLFG). One copy of the SLFG 10; approximate repeat lies at 210-213 (SAFG). An SLFG 11 repeat occupies 220 to 223 (SLFG). Residues 233–234 (FG) form an FG 7 repeat. The SLFG 12; approximate repeat unit spans residues 242–245 (SSFG). One copy of the SLFG 13 repeat lies at 253–256 (SLFG). A compositionally biased stretch (low complexity) spans 259–293 (NNTLGNTTNNRNGLFGQMNSSNQGSSNSGLFGQNS). 2 GLFG repeats span residues 271 to 274 (GLFG) and 287 to 290 (GLFG). The segment covering 294–303 (MNSSTQGVFG) has biased composition (polar residues). The GLFG 6; approximate repeat unit spans residues 300-303 (GVFG). Positions 304 to 317 (QNNNQMQINGNNNN) are enriched in low complexity. The SLFG 14 repeat unit spans residues 318-321 (SLFG). 5 GLFG repeats span residues 333–336 (GLFG), 345–348 (GLFG), 358–361 (GLFG), 379–382 (GLFG), and 393–396 (GLFG). Positions 336-352 (GQNNQQQGSGLFGQNSQ) are enriched in low complexity. Residues 353 to 377 (TSGSSGLFGQNNQKQPNTFTQSNTG) show a composition bias toward polar residues. SLFG repeat units follow at residues 405–408 (SLFG), 417–420 (SLFG), and 436–439 (SLFG). The stretch at 448 to 449 (FG) is one FG 8 repeat. The stretch at 462 to 465 (SLFG) is one SLFG 18 repeat. Residues 474-477 (SLFG) form an SLFG 19; approximate repeat. 3 GLFG repeats span residues 490–493 (GLFG), 506–509 (GLFG), and 523–526 (GLFG). Residues 542-543 (FG) form an FG 9 repeat. Residues 550-553 (GLFG) form a GLFG 15 repeat. An FG 10 repeat occupies 569-570 (FG). 2 disordered regions span residues 672 to 697 (TLERSDRGSSTSNSITDPESSYLNSN) and 745 to 794 (DDQA…PMIE). A compositionally biased stretch (polar residues) spans 679–697 (GSSTSNSITDPESSYLNSN). Over residues 757–775 (LTEKAHSPQTDLKDDHDES) the composition is skewed to basic and acidic residues. Ser763 and Ser783 each carry phosphoserine. Polar residues predominate over residues 777-790 (PDPQSKSPNGSTSI). A Peptidase S59 domain is found at 814-956 (KNNYYISPSI…GTYSYTIDHP (143 aa)). Positions 816 to 955 (NYYISPSIET…TGTYSYTIDH (140 aa)) are nucleoporin RNA-binding motif (NRM).

This sequence belongs to the nucleoporin GLFG family. As to quaternary structure, component of the nuclear pore complex (NPC). NPC constitutes the exclusive means of nucleocytoplasmic transport. NPCs allow the passive diffusion of ions and small molecules and the active, nuclear transport receptor-mediated bidirectional transport of macromolecules such as proteins, RNAs, ribonucleoparticles (RNPs), and ribosomal subunits across the nuclear envelope. Due to its 8-fold rotational symmetry, all subunits are present with 8 copies or multiples thereof. Through its FG repeats NUP100 interacts with numerous karyopherins including KAP95, and MEX67.

The protein resides in the nucleus. The protein localises to the nuclear pore complex. It localises to the nucleus membrane. In terms of biological role, functions as a component of the nuclear pore complex (NPC). NPC components, collectively referred to as nucleoporins (NUPs), can play the role of both NPC structural components and of docking or interaction partners for transiently associated nuclear transport factors. Active directional transport is assured by both, a Phe-Gly (FG) repeat affinity gradient for these transport factors across the NPC and a transport cofactor concentration gradient across the nuclear envelope (GSP1 and GSP2 GTPases associated predominantly with GTP in the nucleus, with GDP in the cytoplasm). NUP100 plays an important role in several nuclear export and import pathways including poly(A)+ RNA and protein transport. The polypeptide is Nucleoporin NUP100/NSP100 (NUP100) (Saccharomyces cerevisiae (strain ATCC 204508 / S288c) (Baker's yeast)).